The chain runs to 112 residues: Ig kappa chain V-II region 2S1.3 (112 aa).

The tract at residues aspartate 1–cysteine 23 is framework-1. The cysteines at positions 23 and 93 are disulfide-linked. The tract at residues arginine 24 to tyrosine 39 is complementarity-determining-1. The segment at tryptophan 40–tyrosine 54 is framework-2. The interval glutamine 55–serine 61 is complementarity-determining-2. Residues glycine 62 to cysteine 93 form a framework-3 region. The interval alanine 94–threonine 102 is complementarity-determining-3. Positions phenylalanine 103–lysine 112 are framework-4.

The polypeptide is Ig kappa chain V-II region 2S1.3 (Mus musculus (Mouse)).